A 349-amino-acid polypeptide reads, in one-letter code: E3 ubiquitin-protein ligase rnf146 (349 aa).

A disordered region spans residues M1–S21. A compositionally biased stretch (low complexity) spans S10 to S21. The RING-type zinc finger occupies C41 to R79. The WWE domain maps to E97–R173. The a glycoprotein site is built by Y113, R116, W120, Y150, Q159, R169, and K181. Disordered regions lie at residues T226–L251 and D264–V349. The segment covering S283–A292 has biased composition (polar residues). The span at W298–A307 shows a compositional bias: acidic residues. The segment covering V308 to L317 has biased composition (basic and acidic residues).

Its subcellular location is the cytoplasm. The protein localises to the cytosol. It is found in the nucleus. It catalyses the reaction S-ubiquitinyl-[E2 ubiquitin-conjugating enzyme]-L-cysteine + [acceptor protein]-L-lysine = [E2 ubiquitin-conjugating enzyme]-L-cysteine + N(6)-ubiquitinyl-[acceptor protein]-L-lysine.. The protein operates within protein modification; protein ubiquitination. In terms of biological role, E3 ubiquitin-protein ligase that specifically binds poly-ADP-ribosylated proteins and mediates their ubiquitination and subsequent degradation. May regulate many important biological processes, such as cell survival and DNA damage response. Acts as an activator of the Wnt signaling pathway by mediating the ubiquitination of poly-ADP-ribosylated proteins. Neuroprotective protein. Protects against cell death induced by DNA damaging agents and rescues cells from G1 arrest. Promotes cell survival after gamma-irradiation. Facilitates DNA repair. This Salmo salar (Atlantic salmon) protein is E3 ubiquitin-protein ligase rnf146 (rnf146).